We begin with the raw amino-acid sequence, 567 residues long: DNA ligase (567 aa).

Glu-260 provides a ligand contact to ATP. The active-site N6-AMP-lysine intermediate is the Lys-262. The ATP site is built by Arg-267, Arg-282, Glu-312, Phe-352, Arg-427, and Lys-433.

Belongs to the ATP-dependent DNA ligase family. Mg(2+) is required as a cofactor.

It carries out the reaction ATP + (deoxyribonucleotide)n-3'-hydroxyl + 5'-phospho-(deoxyribonucleotide)m = (deoxyribonucleotide)n+m + AMP + diphosphate.. In terms of biological role, DNA ligase that seals nicks in double-stranded DNA during DNA replication, DNA recombination and DNA repair. The sequence is that of DNA ligase from Methanococcoides burtonii (strain DSM 6242 / NBRC 107633 / OCM 468 / ACE-M).